Here is a 123-residue protein sequence, read N- to C-terminus: Small ribosomal subunit protein uS13 (123 aa).

The segment at 95 to 123 (GLPVRGQRTKTNARTRKGPIKTVGAKRKK) is disordered.

Belongs to the universal ribosomal protein uS13 family. Part of the 30S ribosomal subunit. Forms a loose heterodimer with protein S19. Forms two bridges to the 50S subunit in the 70S ribosome.

In terms of biological role, located at the top of the head of the 30S subunit, it contacts several helices of the 16S rRNA. In the 70S ribosome it contacts the 23S rRNA (bridge B1a) and protein L5 of the 50S subunit (bridge B1b), connecting the 2 subunits; these bridges are implicated in subunit movement. Contacts the tRNAs in the A and P-sites. The polypeptide is Small ribosomal subunit protein uS13 (Desulfitobacterium hafniense (strain DSM 10664 / DCB-2)).